The chain runs to 316 residues: Malate dehydrogenase (316 aa).

NAD(+) contacts are provided by residues Gly-12–Gly-17 and Asp-36. The substrate site is built by Arg-85 and Arg-91. Residues Asn-98 and Val-121–Asn-123 contribute to the NAD(+) site. The substrate site is built by Asn-123 and Arg-154. Residue His-178 is the Proton acceptor of the active site.

Belongs to the LDH/MDH superfamily. MDH type 3 family.

It catalyses the reaction (S)-malate + NAD(+) = oxaloacetate + NADH + H(+). Catalyzes the reversible oxidation of malate to oxaloacetate. The chain is Malate dehydrogenase from Wolbachia pipientis wMel.